Reading from the N-terminus, the 243-residue chain is Interleukin-27 subunit alpha (243 aa).

The first 28 residues, 1 to 28 (MGQTAGDLGWRLSLLLLPLLLVQAGVWG), serve as a signal peptide directing secretion.

This sequence belongs to the IL-6 superfamily. As to quaternary structure, heterodimer with EBI3; not disulfide-linked. This heterodimer is known as interleukin IL-27. In terms of processing, O-glycosylated. Expressed in monocytes and in placenta.

Its subcellular location is the secreted. Its function is as follows. Associates with EBI3 to form the IL-27 interleukin, a heterodimeric cytokine which functions in innate immunity. IL-27 has pro- and anti-inflammatory properties, that can regulate T-helper cell development, suppress T-cell proliferation, stimulate cytotoxic T-cell activity, induce isotype switching in B-cells, and that has diverse effects on innate immune cells. Among its target cells are CD4 T-helper cells which can differentiate in type 1 effector cells (TH1), type 2 effector cells (TH2) and IL17 producing helper T-cells (TH17). It drives rapid clonal expansion of naive but not memory CD4 T-cells. It also strongly synergizes with IL-12 to trigger interferon-gamma/IFN-gamma production of naive CD4 T-cells, binds to the cytokine receptor WSX-1/TCCR which appears to be required but not sufficient for IL-27-mediated signal transduction. IL-27 potentiate the early phase of TH1 response and suppress TH2 and TH17 differentiation. It induces the differentiation of TH1 cells via two distinct pathways, p38 MAPK/TBX21- and ICAM1/ITGAL/ERK-dependent pathways. It also induces STAT1, STAT3, STAT4 and STAT5 phosphorylation and activates TBX21/T-Bet via STAT1 with resulting IL12RB2 up-regulation, an event crucial to TH1 cell commitment. It suppresses the expression of GATA3, the inhibitor TH1 cells development. In CD8 T-cells, it activates STATs as well as GZMB. IL-27 reveals to be a potent inhibitor of TH17 cell development and of IL-17 production. Indeed IL27 alone is also able to inhibit the production of IL17 by CD4 and CD8 T-cells. While IL-27 suppressed the development of pro-inflammatory Th17 cells via STAT1, it inhibits the development of anti-inflammatory inducible regulatory T-cells, iTreg, independently of STAT1. IL-27 also has an effect on cytokine production, it suppresses pro-inflammatory cytokine production such as IL2, IL4, IL5 and IL6 and activates suppressors of cytokine signaling such as SOCS1 and SOCS3. Apart from suppression of cytokine production, IL-27 also antagonizes the effects of some cytokines such as IL6 through direct effects on T-cells. Another important role of IL-27 is its antitumor activity as well as its antiangiogenic activity with activation of production of antiangiogenic chemokines such as IP-10/CXCL10 and MIG/CXCL9. In vein endothelial cells, it induces IRF1/interferon regulatory factor 1 and increase the expression of MHC class II transactivator/CIITA with resulting up-regulation of major histocompatibility complex class II. IL-27 also demonstrates antiviral activity with inhibitory properties on HIV-1 replication. This chain is Interleukin-27 subunit alpha (IL27), found in Homo sapiens (Human).